The primary structure comprises 100 residues: U12-ctenitoxin-Pn1a (100 aa).

The signal sequence occupies residues 1–28 (MKYRIFKMKYTLLFLSVIALVHIFAVEA). Residues 29-41 (KDEPESDALVPQE) constitute a propeptide that is removed on maturation. 5 cysteine pairs are disulfide-bonded: Cys-44/Cys-58, Cys-51/Cys-64, Cys-57/Cys-82, Cys-66/Cys-80, and Cys-90/Cys-97.

This sequence belongs to the neurotoxin 09 (Tx3-6) family. In terms of tissue distribution, expressed by the venom gland.

The protein localises to the secreted. Its function is as follows. Probable neurotoxin. The polypeptide is U12-ctenitoxin-Pn1a (Phoneutria nigriventer (Brazilian armed spider)).